Reading from the N-terminus, the 434-residue chain is UDP-glucose 6-dehydrogenase (434 aa).

Residues 2 to 19, valine 11, aspartate 30, lysine 35, threonine 121, and glutamate 152 contribute to the NAD(+) site; that span reads NITF…GVMM. Substrate is bound by residues 148-152, lysine 204, asparagine 208, 249-253, and glycine 257; these read EFLRE and FLNAG. Residue cysteine 260 is the Nucleophile of the active site. Lysine 263 serves as a coordination point for NAD(+). A substrate-binding site is contributed by lysine 321. Residue arginine 328 participates in NAD(+) binding.

It belongs to the UDP-glucose/GDP-mannose dehydrogenase family.

The catalysed reaction is UDP-alpha-D-glucose + 2 NAD(+) + H2O = UDP-alpha-D-glucuronate + 2 NADH + 3 H(+). It functions in the pathway nucleotide-sugar biosynthesis; UDP-alpha-D-glucuronate biosynthesis; UDP-alpha-D-glucuronate from UDP-alpha-D-glucose: step 1/1. The chain is UDP-glucose 6-dehydrogenase (udg) from Rickettsia bellii (strain RML369-C).